Here is a 103-residue protein sequence, read N- to C-terminus: Large ribosomal subunit protein uL23 (103 aa).

Belongs to the universal ribosomal protein uL23 family. As to quaternary structure, part of the 50S ribosomal subunit. Contacts protein L29, and trigger factor when it is bound to the ribosome.

One of the early assembly proteins it binds 23S rRNA. One of the proteins that surrounds the polypeptide exit tunnel on the outside of the ribosome. Forms the main docking site for trigger factor binding to the ribosome. The sequence is that of Large ribosomal subunit protein uL23 from Chlorobaculum tepidum (strain ATCC 49652 / DSM 12025 / NBRC 103806 / TLS) (Chlorobium tepidum).